The chain runs to 375 residues: Queuine tRNA-ribosyltransferase (375 aa).

Catalysis depends on Asp-89, which acts as the Proton acceptor. Substrate-binding positions include Asp-89–Phe-93, Asp-143, Gln-187, and Gly-214. The interval Gly-245–Asp-251 is RNA binding. The active-site Nucleophile is Asp-264. The RNA binding; important for wobble base 34 recognition stretch occupies residues Thr-269 to Arg-273. Residues Cys-302, Cys-304, Cys-307, and His-333 each coordinate Zn(2+).

It belongs to the queuine tRNA-ribosyltransferase family. Homodimer. Within each dimer, one monomer is responsible for RNA recognition and catalysis, while the other monomer binds to the replacement base PreQ1. Requires Zn(2+) as cofactor.

It catalyses the reaction 7-aminomethyl-7-carbaguanine + guanosine(34) in tRNA = 7-aminomethyl-7-carbaguanosine(34) in tRNA + guanine. It participates in tRNA modification; tRNA-queuosine biosynthesis. Catalyzes the base-exchange of a guanine (G) residue with the queuine precursor 7-aminomethyl-7-deazaguanine (PreQ1) at position 34 (anticodon wobble position) in tRNAs with GU(N) anticodons (tRNA-Asp, -Asn, -His and -Tyr). Catalysis occurs through a double-displacement mechanism. The nucleophile active site attacks the C1' of nucleotide 34 to detach the guanine base from the RNA, forming a covalent enzyme-RNA intermediate. The proton acceptor active site deprotonates the incoming PreQ1, allowing a nucleophilic attack on the C1' of the ribose to form the product. After dissociation, two additional enzymatic reactions on the tRNA convert PreQ1 to queuine (Q), resulting in the hypermodified nucleoside queuosine (7-(((4,5-cis-dihydroxy-2-cyclopenten-1-yl)amino)methyl)-7-deazaguanosine). This is Queuine tRNA-ribosyltransferase from Salmonella agona (strain SL483).